The primary structure comprises 427 residues: Endothelin-1 receptor (427 aa).

Positions 1 to 20 are cleaved as a signal peptide; that stretch reads METFWLRLSFWVALVGGVIS. Residues 21–80 are Extracellular-facing; the sequence is DNPESYSTNLSIHVDSVATFHGTELSFVVTTHQPTNLALPSNGSMHNYCPQQTKITSAFK. N-linked (GlcNAc...) asparagine glycans are attached at residues asparagine 29 and asparagine 62. A helical transmembrane segment spans residues 81-102; sequence YINTVISCTIFIVGMVGNATLL. Residues 103 to 112 lie on the Cytoplasmic side of the membrane; that stretch reads RIIYQNKCMR. Residues 113–132 form a helical membrane-spanning segment; sequence NGPNALIASLALGDLIYVVI. At 133 to 159 the chain is on the extracellular side; it reads DLPINVFKLLAGRWPFEQNDFGVFLCK. The cysteines at positions 158 and 239 are disulfide-linked. Residues 160–181 traverse the membrane as a helical segment; it reads LFPFLQKSSVGITVLNLCALSV. Residues 182–205 lie on the Cytoplasmic side of the membrane; sequence DRYRAVASWSRVQGIGIPLVTAIE. The chain crosses the membrane as a helical span at residues 206–229; sequence IVSIWILSFILAIPEAIGFVMVPF. Residues 230–256 are Extracellular-facing; that stretch reads EYKGAQHRTCMLNATSKFMEFYQDVKD. A helical membrane pass occupies residues 257-278; sequence WWLFGFYFCMPLVCTAIFYTLM. Topologically, residues 279-306 are cytoplasmic; it reads TCEMLNRRNGSLRIALSEHLKQRREVAK. Residues 307-328 form a helical membrane-spanning segment; it reads TVFCLVVIFALCWFPLHLSRIL. Residues 329–347 are Extracellular-facing; it reads KKTVYDEMDTNRCELLSFL. The helical transmembrane segment at 348 to 372 threads the bilayer; it reads LLMDYIGINLATMNSCINPIALYFV. Residues 373-427 lie on the Cytoplasmic side of the membrane; the sequence is SKKFKNCFQSCLCCCCYQSKSLMTSVPMNGTSIQWKNHEQNNHNTERSSHKDSIN. Serine 425 is subject to Phosphoserine.

This sequence belongs to the G-protein coupled receptor 1 family. Endothelin receptor subfamily. EDNRA sub-subfamily. As to quaternary structure, interacts with HDAC7 and KAT5.

The protein resides in the cell membrane. Functionally, receptor for endothelin-1. Mediates its action by association with G proteins that activate a phosphatidylinositol-calcium second messenger system. The rank order of binding affinities for ET-A is: ET1 &gt; ET2 &gt;&gt; ET3. The protein is Endothelin-1 receptor of Bos taurus (Bovine).